A 240-amino-acid polypeptide reads, in one-letter code: Ribonuclease PH (240 aa).

Phosphate-binding positions include Arg-87 and Gly-125–Arg-127.

The protein belongs to the RNase PH family. Homohexameric ring arranged as a trimer of dimers.

It carries out the reaction tRNA(n+1) + phosphate = tRNA(n) + a ribonucleoside 5'-diphosphate. Functionally, phosphorolytic 3'-5' exoribonuclease that plays an important role in tRNA 3'-end maturation. Removes nucleotide residues following the 3'-CCA terminus of tRNAs; can also add nucleotides to the ends of RNA molecules by using nucleoside diphosphates as substrates, but this may not be physiologically important. Probably plays a role in initiation of 16S rRNA degradation (leading to ribosome degradation) during starvation. The chain is Ribonuclease PH from Stutzerimonas stutzeri (strain A1501) (Pseudomonas stutzeri).